Reading from the N-terminus, the 2157-residue chain is Polyketide synthase 2 (2157 aa).

Residues 7-244 (FIFGDQTGGF…IPIPIWAPYH (238 aa)) form an N-terminal acylcarrier protein transacylase domain (SAT) region. The 434-residue stretch at 374–807 (DAKIAIIGMS…GGNSALLLED (434 aa)) folds into the Ketosynthase family 3 (KS3) domain. Residues Cys-546, His-681, and His-723 each act as for beta-ketoacyl synthase activity in the active site. The tract at residues 908–1213 (GFVFSGQGAQ…ASLHRKDDGW (306 aa)) is malonyl-CoA:ACP transacylase (MAT) domain. Residue Ser-998 is the For acyl/malonyl transferase activity of the active site. Residues 1290–1605 (TSSVQKIIQQ…RSLLNKVLPP (316 aa)) are product template (PT) domain. An N-terminal hotdog fold region spans residues 1294–1428 (QKIIQQTDGP…CLLCFADPNS (135 aa)). One can recognise a PKS/mFAS DH domain in the interval 1294-1600 (QKIIQQTDGP…FLGMSRSLLN (307 aa)). Catalysis depends on His-1327, which acts as the Proton acceptor; for dehydratase activity. The tract at residues 1455–1600 (TDSLLSKGIV…FLGMSRSLLN (146 aa)) is C-terminal hotdog fold. The active-site Proton donor; for dehydratase activity is the Asp-1514. Positions 1629–1653 (AKDTERRPLDIPTRAQRQPNSPPTG) are disordered. The Carrier 1 domain occupies 1649–1726 (SPPTGTLGRI…ELKEFLGADQ (78 aa)). Residue Ser-1686 is modified to O-(pantetheine 4'-phosphoryl)serine. The interval 1729–1765 (DDAVACESSNGQHTPQTSDKGSGTLAAQKPDDDTGSD) is disordered. The segment covering 1735 to 1749 (ESSNGQHTPQTSDKG) has biased composition (polar residues). Residues 1765-1839 (DTTLHRVCAI…SLQKALCGTE (75 aa)) enclose the Carrier 2 domain. Ser-1799 bears the O-(pantetheine 4'-phosphoryl)serine mark. Residues 1875–2151 (ASPPHATSIL…MAEMGDLIGE (277 aa)) are thioesterase (TE) domain. Ser-1981 serves as the catalytic For thioesterase activity.

Polyketide synthase; part of the Pks2 gene cluster that mediates the formation of infectious structures (appressoria), enabling these fungi to kill insects faster. The product of the Pks2 gene cluster is different from the one of Pks1 and has still not been identified. This is Polyketide synthase 2 from Metarhizium guizhouense (strain ARSEF 977).